Consider the following 79-residue polypeptide: Small polypeptide DEVIL 8 (79 aa).

Positions 1 to 12 (MSRLRNSAQLQL) are enriched in polar residues. Residues 1-37 (MSRLRNSAQLQLSKKESLGDNGGALNTTRSSRQKQGK) are disordered. Residue asparagine 26 is glycosylated (N-linked (GlcNAc...) asparagine). Positions 39–70 (GFTRKCGRLVKEQRARFYIMRRCVVMLICWTD) are required for DVL/RTFL small polypeptide activity. The chain crosses the membrane as a helical span at residues 55–71 (FYIMRRCVVMLICWTDH). A glycan (N-linked (GlcNAc...) asparagine) is linked at asparagine 74.

The protein belongs to the DVL/RTFL small polypeptides family.

It localises to the cell membrane. In terms of biological role, small polypeptide acting as a regulatory molecule which coordinates cellular responses required for differentiation, growth and development, probably by restricting polar cell proliferation in lateral organs and coordinating socket cell recruitment and differentiation at trichome sites. The polypeptide is Small polypeptide DEVIL 8 (Arabidopsis thaliana (Mouse-ear cress)).